A 145-amino-acid polypeptide reads, in one-letter code: Large ribosomal subunit protein uL13 (145 aa).

It belongs to the universal ribosomal protein uL13 family. Part of the 50S ribosomal subunit.

Functionally, this protein is one of the early assembly proteins of the 50S ribosomal subunit, although it is not seen to bind rRNA by itself. It is important during the early stages of 50S assembly. The chain is Large ribosomal subunit protein uL13 from Bacillus velezensis (strain DSM 23117 / BGSC 10A6 / LMG 26770 / FZB42) (Bacillus amyloliquefaciens subsp. plantarum).